Reading from the N-terminus, the 105-residue chain is MASVMAWGAGAAVAAFLGRAGLVAWRRSRGGVGAMGKAFYKGGFEAKMTKKEATLILSLNERAITKDKVRKAHRTLMLLNHPDRGGSPYLATKVNEAKEFLDKNG.

The Mitochondrial intermembrane segment spans residues 1-3 (MAS). The chain crosses the membrane as a helical span at residues 4–23 (VMAWGAGAAVAAFLGRAGLV). Over 24 to 105 (AWRRSRGGVG…EAKEFLDKNG (82 aa)) the chain is Mitochondrial matrix. The J domain occupies 52–105 (EATLILSLNERAITKDKVRKAHRTLMLLNHPDRGGSPYLATKVNEAKEFLDKNG).

Belongs to the TIM14 family. In terms of assembly, heterodimer with PAM16. Component of the PAM complex, at least composed of mtHsp70, MGE1, TIM44, PAM16, PAM17 and PAM18.

It is found in the mitochondrion inner membrane. In terms of biological role, essential component of the PAM complex, a complex required for the translocation of transit peptide-containing proteins from the inner membrane into the mitochondrial matrix in an ATP-dependent manner. In the complex, it is required to stimulate activity of mtHSP70 (SSC1). This chain is Mitochondrial import inner membrane translocase subunit TIM14 (PAM18), found in Gibberella zeae (strain ATCC MYA-4620 / CBS 123657 / FGSC 9075 / NRRL 31084 / PH-1) (Wheat head blight fungus).